Here is a 199-residue protein sequence, read N- to C-terminus: Recombination protein RecR (199 aa).

The segment at C58–C73 adopts a C4-type zinc-finger fold. A Toprim domain is found at S81–P176.

This sequence belongs to the RecR family.

May play a role in DNA repair. It seems to be involved in an RecBC-independent recombinational process of DNA repair. It may act with RecF and RecO. In Desulfosudis oleivorans (strain DSM 6200 / JCM 39069 / Hxd3) (Desulfococcus oleovorans), this protein is Recombination protein RecR.